Reading from the N-terminus, the 232-residue chain is Orotate phosphoribosyltransferase (232 aa).

Residues R107, K108, K111, and 133-141 each bind 5-phospho-alpha-D-ribose 1-diphosphate; that span reads EDLTTDGGS. T137 provides a ligand contact to orotate.

This sequence belongs to the purine/pyrimidine phosphoribosyltransferase family. PyrE subfamily. Homodimer. Mg(2+) serves as cofactor.

The catalysed reaction is orotidine 5'-phosphate + diphosphate = orotate + 5-phospho-alpha-D-ribose 1-diphosphate. The protein operates within pyrimidine metabolism; UMP biosynthesis via de novo pathway; UMP from orotate: step 1/2. In terms of biological role, catalyzes the transfer of a ribosyl phosphate group from 5-phosphoribose 1-diphosphate to orotate, leading to the formation of orotidine monophosphate (OMP). The polypeptide is Orotate phosphoribosyltransferase (Cereibacter sphaeroides (strain KD131 / KCTC 12085) (Rhodobacter sphaeroides)).